A 122-amino-acid chain; its full sequence is Protein MGF 110-6L (122 aa).

The first 18 residues, 1-18 (MLVIFLGILGLMASQVLG), serve as a signal peptide directing secretion. N-linked (GlcNAc...) asparagine; by host glycosylation is present at Asn-100. The Prevents secretion from ER signature appears at 119-122 (KDEL).

This sequence belongs to the asfivirus MGF 110 family. In terms of processing, N-glycosylated.

The protein localises to the host endoplasmic reticulum lumen. Functionally, plays a role in virus cell tropism, and may be required for efficient virus replication in macrophages. This chain is Protein MGF 110-6L, found in Ornithodoros (relapsing fever ticks).